Reading from the N-terminus, the 141-residue chain is Hemoglobin subunit alpha-1/2 (141 aa).

The Globin domain occupies 1-141 (VLSPADKTNV…VSTVLTSKYR (141 aa)). Serine 3 is modified (phosphoserine). Position 7 is an N6-succinyllysine (lysine 7). Position 8 is a phosphothreonine (threonine 8). Lysine 11 bears the N6-succinyllysine mark. Lysine 16 bears the N6-acetyllysine; alternate mark. The residue at position 16 (lysine 16) is an N6-succinyllysine; alternate. Residue tyrosine 24 is modified to Phosphotyrosine. At serine 35 the chain carries Phosphoserine. At lysine 40 the chain carries N6-succinyllysine. The residue at position 49 (serine 49) is a Phosphoserine. O2 is bound at residue histidine 58. Histidine 87 serves as a coordination point for heme b. Serine 102 is subject to Phosphoserine. Threonine 108 is modified (phosphothreonine). Position 124 is a phosphoserine (serine 124). A phosphothreonine mark is found at threonine 134 and threonine 137. At serine 138 the chain carries Phosphoserine.

It belongs to the globin family. In terms of assembly, heterotetramer of two alpha chains and two beta chains. Red blood cells.

Involved in oxygen transport from the lung to the various peripheral tissues. This chain is Hemoglobin subunit alpha-1/2, found in Mustela putorius (European polecat).